The following is a 211-amino-acid chain: Protein GrpE (211 aa).

The segment covering 1-13 has biased composition (basic and acidic residues); that stretch reads MVDKDEEQIKQNV. A disordered region spans residues 1–38; sequence MVDKDEEQIKQNVEEDLSSTVEQTGEENIEFPSAPNHP.

Belongs to the GrpE family. As to quaternary structure, homodimer.

The protein resides in the cytoplasm. Its function is as follows. Participates actively in the response to hyperosmotic and heat shock by preventing the aggregation of stress-denatured proteins, in association with DnaK and GrpE. It is the nucleotide exchange factor for DnaK and may function as a thermosensor. Unfolded proteins bind initially to DnaJ; upon interaction with the DnaJ-bound protein, DnaK hydrolyzes its bound ATP, resulting in the formation of a stable complex. GrpE releases ADP from DnaK; ATP binding to DnaK triggers the release of the substrate protein, thus completing the reaction cycle. Several rounds of ATP-dependent interactions between DnaJ, DnaK and GrpE are required for fully efficient folding. This Protochlamydia amoebophila (strain UWE25) protein is Protein GrpE.